The chain runs to 382 residues: D-galactonate dehydratase (382 aa).

Residue D183 coordinates Mg(2+). The active-site Proton donor is the H185. Positions 209 and 235 each coordinate Mg(2+). H285 (proton acceptor) is an active-site residue. The segment at 361–382 (NENPPDWRNPVWRHSDGSIAEW) is disordered.

It belongs to the mandelate racemase/muconate lactonizing enzyme family. GalD subfamily. Mg(2+) is required as a cofactor.

The enzyme catalyses D-galactonate = 2-dehydro-3-deoxy-D-galactonate + H2O. It functions in the pathway carbohydrate acid metabolism; D-galactonate degradation; D-glyceraldehyde 3-phosphate and pyruvate from D-galactonate: step 1/3. Its function is as follows. Catalyzes the dehydration of D-galactonate to 2-keto-3-deoxy-D-galactonate. This Xanthomonas axonopodis pv. citri (strain 306) protein is D-galactonate dehydratase.